Reading from the N-terminus, the 209-residue chain is D-aminoacyl-tRNA deacylase 1 (209 aa).

Residues V4, Q6, and C28 each coordinate Mg(2+). Residues 139-140 carry the Gly-cisPro motif, important for rejection of L-amino acids motif; that stretch reads GP. The segment at 142–209 is disordered; the sequence is TIELESPAPG…EGDVSSEREP (68 aa). 2 stretches are compositionally biased toward basic and acidic residues: residues 159 to 170 and 181 to 194; these read QLSKLEKQQQRK and SSKE…EDRS. Phosphoserine is present on residues S197, S204, and S205.

It belongs to the DTD family. In terms of assembly, homodimer. Interacts with CDC45 and TOPBP1. Post-translationally, preferentially phosphorylated in cells arrested early in S phase. Phosphorylation in the C-terminus weakens the interaction with CDC45.

It localises to the nucleus. It is found in the cytoplasm. It catalyses the reaction glycyl-tRNA(Ala) + H2O = tRNA(Ala) + glycine + H(+). It carries out the reaction a D-aminoacyl-tRNA + H2O = a tRNA + a D-alpha-amino acid + H(+). An aminoacyl-tRNA editing enzyme that deacylates mischarged D-aminoacyl-tRNAs. Also deacylates mischarged glycyl-tRNA(Ala), protecting cells against glycine mischarging by AlaRS. Acts via tRNA-based rather than protein-based catalysis; rejects L-amino acids rather than detecting D-amino acids in the active site. By recycling D-aminoacyl-tRNA to D-amino acids and free tRNA molecules, this enzyme counteracts the toxicity associated with the formation of D-aminoacyl-tRNA entities in vivo and helps enforce protein L-homochirality. In terms of biological role, ATPase involved in DNA replication, may facilitate loading of CDC45 onto pre-replication complexes. In Bos taurus (Bovine), this protein is D-aminoacyl-tRNA deacylase 1 (DTD1).